The primary structure comprises 477 residues: MSRFSGALQLTDLDDFITPSQECIKPVTVDKTATSKTGAKITVQEDGYYEESESGKQKLQKVEITLQDCLACSGCITSAESVLITQQSEEELLKVLRENAKVKATGDMEQVRTIVFTIATQPLLSLAHRYQLSAEETARHLAGYFRSLGVDYVLCTKVADDLALLECQQEFVERYRDNEELTMLSSSCPGWVCYAEKTHGNFILPYIATTRSPQQIMGVLVKQFLAEKLNIPGSRIYHVTVMPCYDKKLEASRMDFYSEVNESRDVDCVITSVEVEQMLNEDERSLSEHEASDLDWPWSEQRPESMVWSHEATLSGGYAEHIFKFAAKELFNEAPPTELSFKQLRNRDFREISLEKDDKTVLKFAIANGFRNIQNLVQKLKRGKGASYHFVEVMACPSGCINGGAQVRPTTGQHVRELTQQLEELYKKLPRSQPDNAHTKLIYRDFLDGSHTDKSNELLHTSYHAVEKLSTALNIKW.

8 residues coordinate [4Fe-4S] cluster: cysteine 23, cysteine 69, cysteine 72, cysteine 75, cysteine 188, cysteine 244, cysteine 396, and cysteine 400.

The protein belongs to the NARF family.

In terms of biological role, component of the cytosolic iron-sulfur (Fe/S) protein assembly machinery. Required for maturation of extramitochondrial Fe/S proteins. This Drosophila persimilis (Fruit fly) protein is Probable cytosolic Fe-S cluster assembly factor GL21135.